The sequence spans 217 residues: Protein-L-isoaspartate O-methyltransferase (217 aa).

Serine 65 is a catalytic residue.

The protein belongs to the methyltransferase superfamily. L-isoaspartyl/D-aspartyl protein methyltransferase family.

Its subcellular location is the cytoplasm. It catalyses the reaction [protein]-L-isoaspartate + S-adenosyl-L-methionine = [protein]-L-isoaspartate alpha-methyl ester + S-adenosyl-L-homocysteine. Functionally, catalyzes the methyl esterification of L-isoaspartyl residues in peptides and proteins that result from spontaneous decomposition of normal L-aspartyl and L-asparaginyl residues. It plays a role in the repair and/or degradation of damaged proteins. The chain is Protein-L-isoaspartate O-methyltransferase from Methanoregula boonei (strain DSM 21154 / JCM 14090 / 6A8).